We begin with the raw amino-acid sequence, 453 residues long: tRNA modification GTPase MnmE (453 aa).

3 residues coordinate (6S)-5-formyl-5,6,7,8-tetrahydrofolate: arginine 22, glutamate 79, and lysine 119. Positions 215–376 constitute a TrmE-type G domain; sequence GMKVVIAGRP…LRNHLKECMG (162 aa). Asparagine 225 lines the K(+) pocket. Residues 225–230, 244–250, 269–272, and 334–337 each bind GTP; these read NAGKSS, TDIAGTT, DTAG, and NKAD. Serine 229 serves as a coordination point for Mg(2+). K(+)-binding residues include threonine 244, isoleucine 246, and threonine 249. Residue threonine 250 participates in Mg(2+) binding. A (6S)-5-formyl-5,6,7,8-tetrahydrofolate-binding site is contributed by lysine 453.

The protein belongs to the TRAFAC class TrmE-Era-EngA-EngB-Septin-like GTPase superfamily. TrmE GTPase family. As to quaternary structure, homodimer. Heterotetramer of two MnmE and two MnmG subunits. Requires K(+) as cofactor.

The protein localises to the cytoplasm. Functionally, exhibits a very high intrinsic GTPase hydrolysis rate. Involved in the addition of a carboxymethylaminomethyl (cmnm) group at the wobble position (U34) of certain tRNAs, forming tRNA-cmnm(5)s(2)U34. The protein is tRNA modification GTPase MnmE of Vibrio vulnificus (strain CMCP6).